Reading from the N-terminus, the 597-residue chain is ATP-dependent lipid A-core flippase (597 aa).

The next 6 helical transmembrane spans lie at 26 to 46 (WIFA…TGLA), 65 to 85 (IQII…ANFI), 144 to 164 (ILTI…MAYL), 166 to 186 (GLLT…IWWV), 250 to 270 (AISQ…VIHL), and 276 to 296 (MLAQ…MLLL). Positions 29–311 (AASIITMAIY…LTKINGTLQR (283 aa)) constitute an ABC transmembrane type-1 domain. In terms of domain architecture, ABC transporter spans 343–579 (IRFEHLSFCY…ESHYAGLYRL (237 aa)). 377 to 384 (GHSGSGKS) serves as a coordination point for ATP.

This sequence belongs to the ABC transporter superfamily. Lipid exporter (TC 3.A.1.106) family. As to quaternary structure, homodimer.

The protein resides in the cell inner membrane. It catalyses the reaction ATP + H2O + lipid A-core oligosaccharideSide 1 = ADP + phosphate + lipid A-core oligosaccharideSide 2.. In terms of biological role, involved in lipopolysaccharide (LPS) biosynthesis. Translocates lipid A-core from the inner to the outer leaflet of the inner membrane. Transmembrane domains (TMD) form a pore in the inner membrane and the ATP-binding domain (NBD) is responsible for energy generation. The sequence is that of ATP-dependent lipid A-core flippase from Nitrosococcus oceani (strain ATCC 19707 / BCRC 17464 / JCM 30415 / NCIMB 11848 / C-107).